The following is a 42-amino-acid chain: Potassium channel toxin gamma-KTx 1.10 (42 aa).

Cystine bridges form between Cys5/Cys23, Cys11/Cys34, Cys20/Cys39, and Cys24/Cys41.

In terms of tissue distribution, expressed by the venom gland.

It localises to the secreted. Its function is as follows. Blocks human Kv11.1/KCNH2/ERG1 potassium channels (reversible, IC(50)=3.4 nM). At high toxin concentrations, block of Kv11.1/KCNH2/ERG1 macroscopic current is almost complete. Does not accelerate the kinetics of the closing process and has no effect on the activation and inactivation kinetics of the Kv11.1/KCNH2/ERG1 channels. The chain is Potassium channel toxin gamma-KTx 1.10 from Centruroides margaritatus (Central American bark Scorpion).